A 390-amino-acid polypeptide reads, in one-letter code: Mevalonate kinase (390 aa).

ATP-binding positions include K16, S130, and 135–141 (GAGLGSS). Mg(2+)-binding residues include S141 and E193. Residue D204 is the Proton acceptor of the active site.

This sequence belongs to the GHMP kinase family. Mevalonate kinase subfamily. The cofactor is Mg(2+).

Its subcellular location is the cytoplasm. It carries out the reaction (R)-mevalonate + ATP = (R)-5-phosphomevalonate + ADP + H(+). It participates in isoprenoid biosynthesis; isopentenyl diphosphate biosynthesis via mevalonate pathway; isopentenyl diphosphate from (R)-mevalonate: step 1/3. Catalyzes the phosphorylation of mevalonate to mevalonate 5-phosphate, a key step in isoprenoid biosynthesis. The protein is Mevalonate kinase of Dictyostelium discoideum (Social amoeba).